The chain runs to 415 residues: Na(+)-translocating NADH-quinone reductase subunit B (415 aa).

4 consecutive transmembrane segments (helical) span residues 23–40 (WFAL…PGLV), 56–76 (IMIM…YNAG), 129–149 (FLPI…LFCM), and 164–184 (ILFA…LGIT). T236 carries the FMN phosphoryl threonine modification. 5 helical membrane passes run 275–295 (VSTL…IASW), 297–317 (IIGG…VIGS), 325–345 (MPWH…FMAT), 358–378 (WAYG…NPAY), and 381–401 (GMML…HVVV).

Belongs to the NqrB/RnfD family. Composed of six subunits; NqrA, NqrB, NqrC, NqrD, NqrE and NqrF. It depends on riboflavin as a cofactor. The cofactor is FMN.

It localises to the cell inner membrane. The enzyme catalyses a ubiquinone + n Na(+)(in) + NADH + H(+) = a ubiquinol + n Na(+)(out) + NAD(+). Functionally, NQR complex catalyzes the reduction of ubiquinone-1 to ubiquinol by two successive reactions, coupled with the transport of Na(+) ions from the cytoplasm to the periplasm. NqrA to NqrE are probably involved in the second step, the conversion of ubisemiquinone to ubiquinol. In Vibrio cholerae serotype O1 (strain ATCC 39541 / Classical Ogawa 395 / O395), this protein is Na(+)-translocating NADH-quinone reductase subunit B.